The primary structure comprises 370 residues: Accessory Sec system protein translocase subunit SecY2 (370 aa).

Transmembrane regions (helical) follow at residues 17–37 (IIFT…PAIT), 65–85 (VFSL…LFYY), 105–125 (IFTL…LLSH), 134–154 (WLII…SDLN), 155–175 (MRFG…RSIM), 188–208 (LLIS…FIEI), 240–260 (IAIM…NLIV), 276–296 (FSTP…SYGI), and 339–359 (WIGA…TLLI).

It belongs to the SecY/SEC61-alpha family. SecY2 subfamily. As to quaternary structure, component of the accessory SecA2/SecY2 protein translocase complex required to export cell wall proteins. May form heterotrimers with SecE and SecG subunits.

Its subcellular location is the cell membrane. Functionally, part of the accessory SecA2/SecY2 system specifically required for export of possible cell wall proteins. The central subunit of a protein translocation channel. This is Accessory Sec system protein translocase subunit SecY2 from Staphylococcus carnosus (strain TM300).